The primary structure comprises 200 residues: Protein OPI10 homolog (200 aa).

Belongs to the OPI10 family.

Its subcellular location is the cytoplasm. The protein localises to the nucleus envelope. The protein is Protein OPI10 homolog of Schizosaccharomyces pombe (strain 972 / ATCC 24843) (Fission yeast).